The following is a 554-amino-acid chain: Acurin A biosynthesis cluster MFS-type transporter (554 aa).

Transmembrane regions (helical) follow at residues 24–44 (WLIFLAIGIATFVAALDTSII), 60–80 (LYIWIINTYLLSSTVSSAIVG), 96–116 (LLIFAVGSAISGAARDTGMLL), 123–143 (GLGGGSITTLSEVLVCDMVSL), and 151–171 (GILGAAWTLAAVVGPIMGGGF). A glycan (N-linked (GlcNAc...) asparagine) is linked at Asn174. Transmembrane regions (helical) follow at residues 179–199 (WIFYINLPIAGSSLFLIVTLL), 219–239 (WGGITLLTLGVTAILLSLTWA), and 251–271 (IVPLILGFLGLLGFIAYEALP). An N-linked (GlcNAc...) asparagine glycan is attached at Asn283. Helical transmembrane passes span 289 to 309 (LFVMAFIYSLLLFWVCYFLPI), 324 to 344 (VMLFPVATTTAPAGIVAGILM), 352 to 372 (SFQYIGFALMTIACGLFTLLD), 385 to 405 (ILFGVGTGIVFTTGLPPILAS), 417 to 437 (TWIFMRNFGAIWGTAIPAAVF), and 496 to 516 (VWQVSIAFCGVGFLLCFLVKA).

Belongs to the major facilitator superfamily.

It is found in the membrane. MFS-type transporter that may have a role in the biosynthesis of acurin A, a highly reduced polyketide coupled to a serine via a peptide bond; either in extra- or intracellular transport. This is Acurin A biosynthesis cluster MFS-type transporter from Aspergillus aculeatus (strain ATCC 16872 / CBS 172.66 / WB 5094).